We begin with the raw amino-acid sequence, 193 residues long: Thymidine kinase (193 aa).

Residues Ser9–Ser16 and Asp87–Asn90 each bind ATP. Glu88 serves as the catalytic Proton acceptor. Residues Cys145, Cys147, Cys182, and His185 each coordinate Zn(2+).

It belongs to the thymidine kinase family. As to quaternary structure, homotetramer.

The protein localises to the cytoplasm. It catalyses the reaction thymidine + ATP = dTMP + ADP + H(+). This is Thymidine kinase from Agrobacterium fabrum (strain C58 / ATCC 33970) (Agrobacterium tumefaciens (strain C58)).